Consider the following 1241-residue polypeptide: Putative ABC transporter B family member 8 (1241 aa).

Residues 24 to 44 traverse the membrane as a helical segment; that stretch reads FADWIDIVLMVLGSVGAIGDG. In terms of domain architecture, ABC transmembrane type-1 1 spans 33–323; it reads MVLGSVGAIG…ALTEIRYFSE (291 aa). A glycan (N-linked (GlcNAc...) asparagine) is linked at Asn48. Helical transmembrane passes span 82 to 102, 157 to 177, 183 to 203, 263 to 283, and 297 to 317; these read LYFV…GYCW, VPIF…SAYF, VVAI…GKYL, GLAV…AWYG, and IYAA…ALTE. The region spanning 360-596 is the ABC transporter 1 domain; the sequence is VEFERVTLVY…NNHYAKLVKL (237 aa). 395 to 402 serves as a coordination point for ATP; it reads GASGSGKS. Residues Asn571, Asn632, and Asn648 are each glycosylated (N-linked (GlcNAc...) asparagine). The ABC transmembrane type-1 2 domain occupies 676–964; sequence SLVGCISATT…AGSMTSDLAK (289 aa). Helical transmembrane passes span 686–706 and 716–736; these read FGAI…AFFA and IHIY…LNLL. Asn773 carries an N-linked (GlcNAc...) asparagine glycan. 2 consecutive transmembrane segments (helical) span residues 797 to 815 and 821 to 838; these read ISLL…IIGL and LALV…CFYT. Asn855 carries an N-linked (GlcNAc...) asparagine glycan. Transmembrane regions (helical) follow at residues 899–919 and 933–953; these read AWLA…TWAL and ISAG…KVIA. The ABC transporter 2 domain maps to 998–1236; the sequence is IELKNIDFSY…GGQFSRLAHA (239 aa). Residue 1033–1040 participates in ATP binding; the sequence is GTSGCGKS. N-linked (GlcNAc...) asparagine glycosylation is present at Asn1187.

The protein belongs to the ABC transporter superfamily. ABCB family. Multidrug resistance exporter (TC 3.A.1.201) subfamily.

Its subcellular location is the membrane. The polypeptide is Putative ABC transporter B family member 8 (ABCB8) (Arabidopsis thaliana (Mouse-ear cress)).